A 157-amino-acid polypeptide reads, in one-letter code: 3-hydroxyacyl-[acyl-carrier-protein] dehydratase FabZ (157 aa).

His-58 is an active-site residue.

It belongs to the thioester dehydratase family. FabZ subfamily.

It is found in the cytoplasm. It catalyses the reaction a (3R)-hydroxyacyl-[ACP] = a (2E)-enoyl-[ACP] + H2O. In terms of biological role, involved in unsaturated fatty acids biosynthesis. Catalyzes the dehydration of short chain beta-hydroxyacyl-ACPs and long chain saturated and unsaturated beta-hydroxyacyl-ACPs. The chain is 3-hydroxyacyl-[acyl-carrier-protein] dehydratase FabZ from Rhizobium rhizogenes (strain K84 / ATCC BAA-868) (Agrobacterium radiobacter).